We begin with the raw amino-acid sequence, 101 residues long: uncharacterized protein (101 aa).

A helical transmembrane segment spans residues Ile-72–Val-94.

Its subcellular location is the membrane. This is an uncharacterized protein from Schizosaccharomyces pombe (strain 972 / ATCC 24843) (Fission yeast).